The sequence spans 136 residues: Psoriasis susceptibility 1 candidate gene 2 protein (136 aa).

An N-terminal signal peptide occupies residues 1 to 22; that stretch reads MILNWKLLGILVLCLHTRGISG. Positions 20–136 are disordered; sequence ISGSEGHPSH…DLDPPREEYR (117 aa). Composition is skewed to pro residues over residues 44 to 69 and 84 to 116; these read PQGP…PTRP and PEPP…PPAP. Basic and acidic residues predominate over residues 118 to 136; sequence VDNRPQEEPDLDPPREEYR.

In terms of tissue distribution, expressed in skin. Also expressed in heart and skeletal muscle.

The protein resides in the secreted. This is Psoriasis susceptibility 1 candidate gene 2 protein (PSORS1C2) from Homo sapiens (Human).